Consider the following 324-residue polypeptide: Phospho-N-acetylmuramoyl-pentapeptide-transferase (324 aa).

10 consecutive transmembrane segments (helical) span residues 5-25, 52-72, 77-97, 117-137, 147-167, 176-196, 203-223, 227-247, 250-270, and 302-322; these read VILFTIIMGFLISVLLSPIFI, PTMGGVMIILSIIATTIVMTM, VSMNMILLLFVTVGYGLLGFL, LIGQIVIALVFYAVYHFQGMP, LSFDFGWIYPVLVIFMLVGGS, LDGLLSGTAAIAFGAFAILAW, VAIFAVAVVGAVLGFLVFNAH, VFMGDTGSLALGGAIVTIAIL, LEILLVIIGGVFVIETLSVIL, and VVVTFWTAGLLLAVLGIYIEV.

It belongs to the glycosyltransferase 4 family. MraY subfamily. Requires Mg(2+) as cofactor.

The protein resides in the cell membrane. It catalyses the reaction UDP-N-acetyl-alpha-D-muramoyl-L-alanyl-gamma-D-glutamyl-meso-2,6-diaminopimeloyl-D-alanyl-D-alanine + di-trans,octa-cis-undecaprenyl phosphate = di-trans,octa-cis-undecaprenyl diphospho-N-acetyl-alpha-D-muramoyl-L-alanyl-D-glutamyl-meso-2,6-diaminopimeloyl-D-alanyl-D-alanine + UMP. The protein operates within cell wall biogenesis; peptidoglycan biosynthesis. In terms of biological role, catalyzes the initial step of the lipid cycle reactions in the biosynthesis of the cell wall peptidoglycan: transfers peptidoglycan precursor phospho-MurNAc-pentapeptide from UDP-MurNAc-pentapeptide onto the lipid carrier undecaprenyl phosphate, yielding undecaprenyl-pyrophosphoryl-MurNAc-pentapeptide, known as lipid I. The sequence is that of Phospho-N-acetylmuramoyl-pentapeptide-transferase from Bacillus licheniformis (strain ATCC 14580 / DSM 13 / JCM 2505 / CCUG 7422 / NBRC 12200 / NCIMB 9375 / NCTC 10341 / NRRL NRS-1264 / Gibson 46).